We begin with the raw amino-acid sequence, 477 residues long: MKILFVAAEGAPFSKTGGLGDVIGALPKSLVKAGHEVAVILPYYDMVEAKFGNQIEDVLHFEVSVGWRRQYCGIKKTVLNGVTFYFIDNQYYFFRGHVYGDFDDGERFAFFQLAAIEAMERIDFIPDLLHVHDYHTAMIPFLLKEKYRWIQAYEDIETVLTIHNLEFQGQFSEGMLGDLFGVGFERYADGTLRWNNCLNWMKAGILYANRVSTVSPSYAHEIMTSQFGCNLDQILKMESGKVSGIVNGIDADLYNPQTDALLDYHFNQEDLSGKAKNKAKLQERVGLPVRADVPLVGIVSRLTRQKGFDVVVESLHHILQEDVQIVLLGTGDPAFEGAFSWFAQIYPDKLSTNITFDVKLAQEIYAACDLFLMPSRFEPCGLSQMMAMRYGTLPLVHEVGGLRDTVRAFNPIEGSGTGFSFDNLSPYWLNWTFQTALDLYRNHPDIWRNLQKQAMESDFSWDTACKSYLDLYHSLVN.

Lys-15 is an ADP-alpha-D-glucose binding site.

This sequence belongs to the glycosyltransferase 1 family. Bacterial/plant glycogen synthase subfamily.

The catalysed reaction is [(1-&gt;4)-alpha-D-glucosyl](n) + ADP-alpha-D-glucose = [(1-&gt;4)-alpha-D-glucosyl](n+1) + ADP + H(+). Its pathway is glycan biosynthesis; glycogen biosynthesis. Its function is as follows. Synthesizes alpha-1,4-glucan chains using ADP-glucose. This is Glycogen synthase from Streptococcus pneumoniae serotype 4 (strain ATCC BAA-334 / TIGR4).